The sequence spans 358 residues: Aromatic amino acid aminotransferase (358 aa).

The residue at position 222 (K222) is an N6-(pyridoxal phosphate)lysine.

This sequence belongs to the class-II pyridoxal-phosphate-dependent aminotransferase family. As to quaternary structure, homodimer. It depends on pyridoxal 5'-phosphate as a cofactor.

The catalysed reaction is an aromatic L-alpha-amino acid + 2-oxoglutarate = an aromatic oxo-acid + L-glutamate. Its function is as follows. Aminotransferase that catalyzes the conversion of aromatic amino acids and 2-oxoglutarate into corresponding aromatic oxo acids and L-glutamate. This Mycobacterium sp. (strain JLS) protein is Aromatic amino acid aminotransferase.